We begin with the raw amino-acid sequence, 292 residues long: Protein LicB (292 aa).

EamA domains follow at residues 70 to 139 and 160 to 286; these read ALSG…LLAI and LGWS…VTLY.

The sequence is that of Protein LicB (licB) from Haemophilus influenzae (strain ATCC 51907 / DSM 11121 / KW20 / Rd).